A 286-amino-acid polypeptide reads, in one-letter code: Beta-lactamase Ohio-1 (286 aa).

The signal sequence occupies residues 1-21 (MRYFRLCIISLLATLPLRVHA). Ser-66 serves as the catalytic Acyl-ester intermediate. An intrachain disulfide couples Cys-73 to Cys-119. Catalysis depends on Glu-164, which acts as the Proton acceptor. A substrate-binding site is contributed by 230 to 232 (KTG).

The protein belongs to the class-A beta-lactamase family.

The catalysed reaction is a beta-lactam + H2O = a substituted beta-amino acid. In Enterobacter cloacae, this protein is Beta-lactamase Ohio-1.